The sequence spans 592 residues: BRCA1-associated protein (592 aa).

Position 52 is a phosphoserine (serine 52). The tract at residues 78–124 (KSNPDELKTTVEERKSSEASPTAQRSKDHSKECINAAPDSPSKQLPD) is disordered. Over residues 80 to 94 (NPDELKTTVEERKSS) the composition is skewed to basic and acidic residues. 3 positions are modified to phosphoserine: serine 97, serine 117, and serine 119. The RING-type zinc-finger motif lies at 264–304 (CTVCLERMDESVNGILTTLCNHSFHSQCLQRWDDTTCPVCR). The UBP-type; degenerate zinc finger occupies 301–393 (PVCRYCQTPE…GKIVQYECEG (93 aa)). Residues cysteine 317, cysteine 320, cysteine 329, cysteine 332, cysteine 337, histidine 344, histidine 348, and histidine 354 each coordinate Zn(2+). The stretch at 429–537 (RIEKDTAEEI…EIQEQLRDVM (109 aa)) forms a coiled coil. Positions 565-592 (AMASASSPASSGGSGKLPSRKGRSKRGK) are disordered. Residues 582-592 (PSRKGRSKRGK) are compositionally biased toward basic residues.

In terms of assembly, interacts with the nuclear localization signal of BRCA1 and with the N-terminal of KSR1. The C-terminal portion of BCRA1 interacts with DDB1. As to expression, expressed in breast epithelial cell lines.

The protein resides in the cytoplasm. It catalyses the reaction S-ubiquitinyl-[E2 ubiquitin-conjugating enzyme]-L-cysteine + [acceptor protein]-L-lysine = [E2 ubiquitin-conjugating enzyme]-L-cysteine + N(6)-ubiquitinyl-[acceptor protein]-L-lysine.. The protein operates within protein modification; protein ubiquitination. Its function is as follows. Negatively regulates MAP kinase activation by limiting the formation of Raf/MEK complexes probably by inactivation of the KSR1 scaffold protein. Also acts as a Ras responsive E3 ubiquitin ligase that, on activation of Ras, is modified by auto-polyubiquitination resulting in the release of inhibition of Raf/MEK complex formation. May also act as a cytoplasmic retention protein with a role in regulating nuclear transport. The polypeptide is BRCA1-associated protein (Homo sapiens (Human)).